A 2360-amino-acid polypeptide reads, in one-letter code: MAQKPQQFDVLGDTGARVDRPRDSLALIFKRALELGLDDVSQDGGVRFTVGTMCSGTDAPILALRELQDAALAMGYNHLFDFDHQFSVEIEAYKQAFIERNSKPSGEIYRDVIQVSDPSRKDAITAHGSLAPIPAAPDLLVAGSSCVDFSKLNNKRDILAKHSVLSRLYEEAKNTKNGLDFGTVTPQSQSHDVRMALQDVRDSFHTEGESVKTFGSILQFIYDQRPKLIILENVSHAPWRAFTHFWLPLVGYVALSMKVDSKNFLVPQTRTRGYLVAVDQWHYGTELSTRMARLWSSMMESSNWFPNQYPEVHKFLLSSMDQRILEARAIEERKIAENMTRDVEARMCAYDHAKVRRQQGLGPDRPFTQRDGRGNLLPRDTSWQAYIRGTSSRVQDLLDITWLSERKKGGRDLNYKAKYLDLGEGVERLKTQIGIVGCVLPDGDLFATDQGRPILGVEALSLQGLPIDRIRTSVETQADLHDMAGNAMTTTVVGAATLCILIAERQVTRSSGFHDGLPLLDNGASTRTQHLKHLFAIRQSDRNGAADGAFALLQHCPSYSTAQKDQAAVAHLIMIHQKGRRYCPCAGYRKHNPATGLMICTLCNQVRCVTCAGNPAHAFETLLTGPLWSWDETIHALRGILPNRFALTGGHGIPQDDKDVKSLCSSLYTTEKENGNITTRLRELRKCLGAVYYLDHFDNSQVIVATYVSTCGRIELSIGLDQVVWYLYLPEPLEPGSFNQQPAPPIARAILDKSADNVFPSCLSWEIFFLQPVPVVLSLEPQSDSTFRCFVTEFNGQPIKSYPIIPMAATELMVGVEGVYEFSQTCGTPFDLLYSRRTAGSEPSSAPCYLFLDTKHTTEPEEDSWVMSQSVSKLEPGTHREVLCKFSSSWKEQEQKLRQHGTPQTVQCEIPGLWRSVHQTNGALMNISMSDVHLAPDRMTAETSEDLHVIIPGALNFPDVAQAPIPVLQLRIDIPDLPFPVHLLPQLWKTDGEIFKECAKETDSGEKWMRVSDHHHKDALSLISFALGALKANHLPREFTVGILERAGAVCQSLDADFPNPKVHLLWEGFKVKKLFDDSEAAQQLAESYSKRPLPLELDVQIVRADQPRHTGDLYSGRAGGNIAQEPELIIRILFNPTALAHRAWLHIPRDGLIRGIRRDVMQDGHIGFAVDVEFVDPSLKMIEPFEACLSQDVISSATYASAIQLPSFDSCGVQLRPDQIQSVQWMIEKESSNSCFVEREVEEFLVPSSSIRLRSHAEVVNRARGGVLAHDVGFGKTIATLALIDHQRNQSNERSVTERYAWTQERHCHLKATLIVCPPQIVDQWRDEIERFLGSENWNVVVINAKTPFHRGILEMADIVILSTAFIHSTAFVQALTRVAGAANFHDASSASSREFNIWYREAVTDLEDSCQCYADNNRNNGALAKHISLRTQERKASFEKARAACIVESRRKDQKSKATARTQRAKKKSKKPRRTAAAAAESDHSAESDSDSAMDDRKRKVATSHVVSDFKDATVLQMYSFDRVVLDEFSYENKSTAAFVANCVASSKWILSGTPPMADLSQVCAIADLVNMHVARPEASVPRSFPSITRGPRLDKTTRGEAMRQYADPKSAQFALERHEQARTFLEHKMTRRETDISHIGVTEQVVVCRLDPVSSVVYAQLQQVLYDARWDIEEVPGDMRAIIDWLLQQTGNNKASKARENLRMSWHNTIQSLLVQSSTNLSAYGENMKKLGMDVRAGAVSGITVLTSMRTIYQRLQARSKAMIKSQFDMLMYVVDQVQMSGLLTMTNAKGRDKTKQDKAMYYQDHLDDFIQRFTAARPWSFGDAEIRDDFWKGGNGVYGAIDWWKLTEEDVEAMDEDELKHVETKLVCFKASYNPESQMEATGQQLEESVCDLLNANVLDQYHEAEPEKVAANIGLASATLLDVYWKDTAKSKDFEFGNKFRPYRPKLNEEETDRGTSHDQATNRMAMALQSVQAGIEEYIRQARRLRVLGIVQDLFAFAQALEAGHQPNAPTCSVCGSQDNTEMKDLSLFITCGHLLCSGCVAAHEHQHGQAESTTGEVLCPVDSCSAMARSALVPCTQLISATAASTLDFEGKSAKVMKILDVIRTDVKDDEKVLLFVSNKKLKAQLSDALEEDDNVDVYMTTGTHHDTDAIRSFKEPNEDGRKKVLVQSLMSEESAGTNLTEANHVMFAAPLHTDRRNHYMYMRQARGRAIRFGQTRPVRVYHFVTAHTMEVDVLEHRLGHKLLIPEGGDRMPLDDLDYKLYALDTRAASRGPPSATKEASAAPTISSTLRRIRPYIDEVETRKLLDSQEYDEWQDRLDVSPSAATKQTPWFRSQVVEQSADEVYDDDVEVGN.

One can recognise an SAM-dependent MTase C5-type domain in the interval 48–507 (FTVGTMCSGT…LCILIAERQV (460 aa)). Residue C146 is part of the active site. The Helicase ATP-binding domain occupies 1258-1575 (AEVVNRARGG…CAIADLVNMH (318 aa)). An ATP-binding site is contributed by 1271 to 1278 (HDVGFGKT). The segment at 1451-1498 (SRRKDQKSKATARTQRAKKKSKKPRRTAAAAAESDHSAESDSDSAMDD) is disordered. The span at 1465-1476 (QRAKKKSKKPRR) shows a compositional bias: basic residues. The RING-type; degenerate zinc-finger motif lies at 2018–2070 (CSVCGSQDNTEMKDLSLFITCGHLLCSGCVAAHEHQHGQAESTTGEVLCPVDS). The 166-residue stretch at 2102–2267 (KVMKILDVIR…RMPLDDLDYK (166 aa)) folds into the Helicase C-terminal domain.

In the N-terminal section; belongs to the class I-like SAM-binding methyltransferase superfamily. C5-methyltransferase family. The protein in the C-terminal section; belongs to the SNF2/RAD54 helicase family.

The protein resides in the nucleus. It localises to the chromosome. The enzyme catalyses a 2'-deoxycytidine in DNA + S-adenosyl-L-methionine + ATP + H2O = a 5-methyl-2'-deoxycytidine in DNA + S-adenosyl-L-homocysteine + ADP + phosphate + 2 H(+). May play a role in cytosine methylation at palindromic 5'-CG-3' and 5'-C[ACT]G-3' sites in DNA. The sequence is that of DNA (cytosine-5-)-methyltransferase DMT5 from Verticillium dahliae (strain VdLs.17 / ATCC MYA-4575 / FGSC 10137) (Verticillium wilt).